The following is a 622-amino-acid chain: DNA topoisomerase 3 (622 aa).

A Toprim domain is found at 2–148; the sequence is RVLCVAEKNS…SIQVIRADFN (147 aa). In terms of domain architecture, Topo IA-type catalytic spans 166-596; the sequence is SKNAADAVDA…MILTQFRDVF (431 aa). Residue Tyr330 is the O-(5'-phospho-DNA)-tyrosine intermediate of the active site.

It belongs to the type IA topoisomerase family. Interacts with hus2.

It carries out the reaction ATP-independent breakage of single-stranded DNA, followed by passage and rejoining.. Releases the supercoiling and torsional tension of DNA introduced during the DNA replication and transcription by transiently cleaving and rejoining one strand of the DNA duplex. Introduces a single-strand break via transesterification at a target site in duplex DNA. The scissile phosphodiester is attacked by the catalytic tyrosine of the enzyme, resulting in the formation of a DNA-(5'-phosphotyrosyl)-enzyme intermediate and the expulsion of a 3'-OH DNA strand. The free DNA strand than undergoes passage around the unbroken strand thus removing DNA supercoils. Finally, in the religation step, the DNA 3'-OH attacks the covalent intermediate to expel the active-site tyrosine and restore the DNA phosphodiester backbone. In Schizosaccharomyces pombe (strain 972 / ATCC 24843) (Fission yeast), this protein is DNA topoisomerase 3 (top3).